A 126-amino-acid polypeptide reads, in one-letter code: C-type natriuretic peptide 1 (126 aa).

The first 22 residues, 1 to 22 (MLCPALLCAALLLLTPVEITDA), serve as a signal peptide directing secretion. Residues 23-104 (RALQQPSDAA…KRAEPDRSRR (82 aa)) constitute a propeptide that is removed on maturation. Cys110 and Cys126 are disulfide-bonded.

The protein belongs to the natriuretic peptide family.

The protein resides in the secreted. In terms of biological role, exhibits natriuretic and vasodepressant activity. Has cGMP-stimulating activity. May help to regulate body fluid homeostasis in a variety of aquatic environments. This Takifugu rubripes (Japanese pufferfish) protein is C-type natriuretic peptide 1.